The following is a 661-amino-acid chain: DnaJ protein ERDJ2B (661 aa).

The Lumenal portion of the chain corresponds to 1–8; the sequence is MAESEENS. A helical membrane pass occupies residues 9–29; the sequence is VLFPIFILTMMAIPLVPYTFV. Topologically, residues 30 to 65 are cytoplasmic; the sequence is KLSRAFSKKQRSIHCQCLECDRSGKYKRSISQSISS. The helical transmembrane segment at 66 to 86 threads the bilayer; that stretch reads FTSCSNLTVVLLWIVMIFLIY. Residues 87 to 190 lie on the Lumenal side of the membrane; sequence HTKNMSRESQ…FILNMNGESG (104 aa). N-linked (GlcNAc...) asparagine glycosylation occurs at Asn90. The 66-residue stretch at 99–164 folds into the J domain; it reads EPFGILGLEP…LSRENFEKYG (66 aa). A helical transmembrane segment spans residues 191-211; the sequence is GILLLCTVGLCILLPLVIASI. Residues 206-597 enclose the SEC63 domain; that stretch reads LVIASIYLWR…IGCDQKTSLK (392 aa). The Cytoplasmic portion of the chain corresponds to 212 to 661; the sequence is YLWRSSKYTG…SSEESGSDEE (450 aa). The segment at 608 to 661 is disordered; sequence EGENAEEGLEEEDDEIEEEDYESEYSEDEEDKKRGSKKKVNKESSSEESGSDEE. Residues 609–637 are compositionally biased toward acidic residues; sequence GENAEEGLEEEDDEIEEEDYESEYSEDEE.

As to quaternary structure, interacts with OEP61/TPR7. Expressed in leaves, flower buds and flowers.

The protein localises to the endoplasmic reticulum membrane. Its function is as follows. Required for integral membrane and secreted preprotein translocation across the endoplasmic reticulum membrane. This is DnaJ protein ERDJ2B (ERDJ2B) from Arabidopsis thaliana (Mouse-ear cress).